The primary structure comprises 141 residues: VLSPADKTNVKAAWGKVGGHGGEYGAEALERMFLSFPTTKTYFPHFDLSHGSAQVKGHGKKVADALTNAVAHVDDMPHALSALSDLHAHKLRVDPVNFKLLSHCLLVTLAAHLPAEFTPAVHASLDKFLASVSTVLTSKYR.

The region spanning 1 to 141 is the Globin domain; the sequence is VLSPADKTNV…VSTVLTSKYR (141 aa). Phosphoserine is present on serine 3. An N6-succinyllysine modification is found at lysine 7. Threonine 8 carries the post-translational modification Phosphothreonine. Lysine 11 bears the N6-succinyllysine mark. Lysine 16 is modified (N6-acetyllysine; alternate). Lysine 16 bears the N6-succinyllysine; alternate mark. Tyrosine 24 bears the Phosphotyrosine mark. Residue serine 35 is modified to Phosphoserine. Lysine 40 bears the N6-succinyllysine mark. The residue at position 49 (serine 49) is a Phosphoserine. Histidine 58 provides a ligand contact to O2. Histidine 87 contributes to the heme b binding site. Phosphoserine is present on serine 102. Residue threonine 108 is modified to Phosphothreonine. A phosphoserine mark is found at serine 124 and serine 131. Phosphothreonine occurs at positions 134 and 137. At serine 138 the chain carries Phosphoserine.

This sequence belongs to the globin family. In terms of assembly, heterotetramer of two alpha chains and two beta chains. As to expression, red blood cells.

Involved in oxygen transport from the lung to the various peripheral tissues. In terms of biological role, hemopressin acts as an antagonist peptide of the cannabinoid receptor CNR1. Hemopressin-binding efficiently blocks cannabinoid receptor CNR1 and subsequent signaling. The polypeptide is Hemoglobin subunit alpha (HBA) (Semnopithecus entellus (Northern plains gray langur)).